The primary structure comprises 96 residues: MPGPTPSGTNVGSSGRSPSKAVAARAAGSTVRQRKNASCGTRSAGRTTSAGTGGMWRFYTEDSPGLKVGPVPVLVMSLLFIAAVFMLHIWGKYTRS.

Positions 1–17 (MPGPTPSGTNVGSSGRS) are enriched in polar residues. The segment at 1–54 (MPGPTPSGTNVGSSGRSPSKAVAARAAGSTVRQRKNASCGTRSAGRTTSAGTGG) is disordered. Pro-2 is modified (N-acetylproline). Residues 2–70 (PGPTPSGTNV…EDSPGLKVGP (69 aa)) are Cytoplasmic-facing. Residue Ser-7 is modified to Phosphoserine. Phosphothreonine is present on Thr-9. Phosphoserine occurs at positions 13, 14, and 17. Cys-39 carries the S-palmitoyl cysteine lipid modification. A compositionally biased stretch (low complexity) spans 40–50 (GTRSAGRTTSA). Residues 71–91 (VPVLVMSLLFIAAVFMLHIWG) traverse the membrane as a helical segment.

Belongs to the SEC61-beta family. The SEC61 channel-forming translocon complex consists of channel-forming core components SEC61A1, SEC61B and SEC61G and different auxiliary components such as SEC62 and SEC63. The SEC61 channel associates with the multi-pass translocon (MPT) complex. Interacts with TRAM1.

It localises to the endoplasmic reticulum membrane. Its function is as follows. Component of SEC61 channel-forming translocon complex that mediates transport of signal peptide-containing precursor polypeptides across the endoplasmic reticulum (ER). Forms a ribosome receptor and a gated pore in the ER membrane, both functions required for cotranslational translocation of nascent polypeptides. The SEC61 channel is also involved in ER membrane insertion of transmembrane proteins: it mediates membrane insertion of the first few transmembrane segments of proteins, while insertion of subsequent transmembrane regions of multi-pass membrane proteins is mediated by the multi-pass translocon (MPT) complex. The SEC61 channel cooperates with the translocating protein TRAM1 to import nascent proteins into the ER. Required for PKD1/Polycystin-1 biogenesis. The polypeptide is Protein transport protein Sec61 subunit beta (Mus musculus (Mouse)).